The primary structure comprises 175 residues: Peptide methionine sulfoxide reductase MsrA (175 aa).

Cysteine 10 is an active-site residue.

Belongs to the MsrA Met sulfoxide reductase family.

It catalyses the reaction L-methionyl-[protein] + [thioredoxin]-disulfide + H2O = L-methionyl-(S)-S-oxide-[protein] + [thioredoxin]-dithiol. It carries out the reaction [thioredoxin]-disulfide + L-methionine + H2O = L-methionine (S)-S-oxide + [thioredoxin]-dithiol. In terms of biological role, has an important function as a repair enzyme for proteins that have been inactivated by oxidation. Catalyzes the reversible oxidation-reduction of methionine sulfoxide in proteins to methionine. The sequence is that of Peptide methionine sulfoxide reductase MsrA from Clavibacter sepedonicus (Clavibacter michiganensis subsp. sepedonicus).